The primary structure comprises 383 residues: 1-deoxy-D-xylulose 5-phosphate reductoisomerase (383 aa).

Positions 10, 11, 12, 13, 36, 37, 38, and 122 each coordinate NADPH. Residue Lys-123 participates in 1-deoxy-D-xylulose 5-phosphate binding. Glu-124 serves as a coordination point for NADPH. Position 148 (Asp-148) interacts with Mn(2+). Ser-149, Glu-150, Ser-174, and His-197 together coordinate 1-deoxy-D-xylulose 5-phosphate. Glu-150 provides a ligand contact to Mn(2+). NADPH is bound at residue Gly-203. Positions 210, 215, 216, and 219 each coordinate 1-deoxy-D-xylulose 5-phosphate. Position 219 (Glu-219) interacts with Mn(2+).

The protein belongs to the DXR family. The cofactor is Mg(2+). It depends on Mn(2+) as a cofactor.

The catalysed reaction is 2-C-methyl-D-erythritol 4-phosphate + NADP(+) = 1-deoxy-D-xylulose 5-phosphate + NADPH + H(+). It participates in isoprenoid biosynthesis; isopentenyl diphosphate biosynthesis via DXP pathway; isopentenyl diphosphate from 1-deoxy-D-xylulose 5-phosphate: step 1/6. Its function is as follows. Catalyzes the NADPH-dependent rearrangement and reduction of 1-deoxy-D-xylulose-5-phosphate (DXP) to 2-C-methyl-D-erythritol 4-phosphate (MEP). The protein is 1-deoxy-D-xylulose 5-phosphate reductoisomerase of Bacillus pumilus (strain SAFR-032).